Consider the following 173-residue polypeptide: Photosystem I assembly protein Ycf3 (173 aa).

3 TPR repeats span residues 35–68, 72–105, and 120–153; these read AYVYYRDGLSAQNAGDYAEALENYEESLKLEESP, SETLKNMAIIYMSNGDEDLALDTYQRALDQNSNQ, and GRTAQEAGLQDEADQLFDRAADVWTQAVRLYPGG.

Belongs to the Ycf3 family.

It localises to the cellular thylakoid membrane. Functionally, essential for the assembly of the photosystem I (PSI) complex. May act as a chaperone-like factor to guide the assembly of the PSI subunits. In Prochlorococcus marinus (strain MIT 9303), this protein is Photosystem I assembly protein Ycf3.